Here is a 183-residue protein sequence, read N- to C-terminus: Adenine phosphoribosyltransferase (183 aa).

It belongs to the purine/pyrimidine phosphoribosyltransferase family. In terms of assembly, homodimer.

The protein localises to the cytoplasm. It carries out the reaction AMP + diphosphate = 5-phospho-alpha-D-ribose 1-diphosphate + adenine. Its pathway is purine metabolism; AMP biosynthesis via salvage pathway; AMP from adenine: step 1/1. In terms of biological role, catalyzes a salvage reaction resulting in the formation of AMP, that is energically less costly than de novo synthesis. This chain is Adenine phosphoribosyltransferase, found in Escherichia coli O157:H7.